The following is a 952-amino-acid chain: UvrABC system protein A (952 aa).

31-38 (GVSGSGKS) serves as a coordination point for ATP. The C4-type zinc-finger motif lies at 253–280 (CPEHGSVLEELEPRIFSFNSPYGACPAC). ABC transporter domains lie at 309 to 591 (WSRG…PQSL) and 611 to 938 (GNGK…AFLA). 643–650 (GPSGSGKS) is a binding site for ATP. The C4-type zinc-finger motif lies at 742–768 (CEACGGDGTVKIEMLFLPDLYVPCEVC).

It belongs to the ABC transporter superfamily. UvrA family. In terms of assembly, forms a heterotetramer with UvrB during the search for lesions.

The protein localises to the cytoplasm. In terms of biological role, the UvrABC repair system catalyzes the recognition and processing of DNA lesions. UvrA is an ATPase and a DNA-binding protein. A damage recognition complex composed of 2 UvrA and 2 UvrB subunits scans DNA for abnormalities. When the presence of a lesion has been verified by UvrB, the UvrA molecules dissociate. The polypeptide is UvrABC system protein A (Thermus thermophilus (strain ATCC 27634 / DSM 579 / HB8)).